Here is a 513-residue protein sequence, read N- to C-terminus: Calcium-dependent protein kinase 2 (513 aa).

Residue glycine 2 is the site of N-myristoyl glycine attachment. The Protein kinase domain maps to 72-326; that stretch reads YIIDEKLGQG…IEEALNHPWI (255 aa). Residues 78–86 and lysine 101 each bind ATP; that span reads LGQGTYGCV. Aspartate 192 (proton acceptor) is an active-site residue. Residues 345–353 carry the J domain autoinhibitory motif motif; that stretch reads NLKNFKKEN. Residues 345 to 380 form a j domain region; the sequence is NLKNFKKENELKKIALTIIAKHLCDVEINNLRNIFI. Positions 354–363 match the J domain EF-hand interaction motif motif; sequence ELKKIALTII. EF-hand domains follow at residues 370–405, 406–441, 442–477, and 480–513; these read VEIN…IGYQ, KIPP…KQTY, LKKE…DDIE, and LIDK…SKKK. Residues aspartate 383, aspartate 385, serine 387, threonine 389, and glutamate 394 each coordinate Ca(2+). Ca(2+) contacts are provided by aspartate 455, aspartate 457, asparagine 459, lysine 461, glutamate 466, aspartate 493, asparagine 495, aspartate 497, glutamate 499, and glutamate 504.

Belongs to the protein kinase superfamily. Ser/Thr protein kinase family. CDPK subfamily. As to quaternary structure, monomer. The cofactor is Mg(2+). Post-translationally, myristoylated; myristoylation may target it to different subcellular compartments. In terms of processing, autophosphorylated in vitro.

The catalysed reaction is L-seryl-[protein] + ATP = O-phospho-L-seryl-[protein] + ADP + H(+). The enzyme catalyses L-threonyl-[protein] + ATP = O-phospho-L-threonyl-[protein] + ADP + H(+). With respect to regulation, activated by calcium. Upon calcium binding to the EF-hand domains, the C-terminus of the junction domain (J domain) undergoes a conformational change which results in the dissociation of the pseudo-substrate inhibitory motif from the catalytic domain. This, in turn, may facilitate the autophosphorylation of the activation loop at Thr-232, which leads to the kinase activation. Its function is as follows. Calcium-dependent protein kinase which acts as a sensor and effector of intracellular Ca(2+) levels probably in part downstream of cGMP-activated PKG kinase. During male gametogenesis in the mosquito gut, required for male exflagellation, possibly by regulating male gamete exit from the host erythrocytes. Not required for asexual blood stage proliferation. This Plasmodium falciparum (isolate K1 / Thailand) protein is Calcium-dependent protein kinase 2.